The chain runs to 683 residues: MANDPRKLLVTCALPYANGSIHLGHMLEHIQADIWVRYQRLRGNTVNFICADDAHGTPIMLKAQQMGMTPEAMIEMVSEEHQRDFAGFDISFDNYHSTHSDENRELASHIYLQLKKNGFISSRTISQLFDPEKEMFLPDRFVKGTCPKCKSEDQYGDNCDACGETYSPTELINPKSAVSGATPVMKDSEHFFFDLPQFESMLKEWTRSGSLQSETANKMQEWFEGGLQQWDISRDAPYFGFEIPGEKDKFFYVWLDAPIGYMGSFKNLCDKRGDLNFNEYWNKDSKTELYHFIGKDIVYFHSLFWPAMLDGSGFRKPTNVFVHGYVTVNGAKMSKSKGTFVKASTYLNHLDPECLRYYYAAKLNNRIDDLDLNLEDFTQRVNADVVNKIVNLASRNAGFITKRFDGKLSAHFAEPELYAEFAGAADRIAELFEAREFGRAIREITALADKANQYVDEKAPWVVAKQEGQDQALQDICTVGINLFRILMTYLKPVMPALAERTEAFLNQELTWEGVATPLTDHAVTPFKALFNRIDPKQVEAMIEASKAEAAAEKAAADAAKPKSAETELSKDPLAAEIEFDDFAKVDLRIAKILSCEAVEKSDKLLKFELDIGGETRQVFSGIKSAYQPEDLIGKYTVVVANLKPRKMKFGMSEGMILAAGPGGSDLWLLEPHQGAQAGMRVM.

The 'HIGH' region signature appears at 15–25 (PYANGSIHLGH). Zn(2+) contacts are provided by cysteine 146, cysteine 149, cysteine 159, and cysteine 162. Positions 332–336 (KMSKS) match the 'KMSKS' region motif. Residue lysine 335 coordinates ATP. In terms of domain architecture, tRNA-binding spans 582–683 (DFAKVDLRIA…QGAQAGMRVM (102 aa)).

This sequence belongs to the class-I aminoacyl-tRNA synthetase family. MetG type 1 subfamily. As to quaternary structure, homodimer. Requires Zn(2+) as cofactor.

Its subcellular location is the cytoplasm. The catalysed reaction is tRNA(Met) + L-methionine + ATP = L-methionyl-tRNA(Met) + AMP + diphosphate. Is required not only for elongation of protein synthesis but also for the initiation of all mRNA translation through initiator tRNA(fMet) aminoacylation. The chain is Methionine--tRNA ligase from Vibrio cholerae serotype O1 (strain ATCC 39541 / Classical Ogawa 395 / O395).